A 346-amino-acid chain; its full sequence is ATP-dependent 6-phosphofructokinase (346 aa).

ATP contacts are provided by residues G13, 76–77 (RL), and 106–109 (GEGT). E107 serves as a coordination point for Mg(2+). Residues 129–131 (TID), R166, 173–175 (MGR), E226, R270, and 276–279 (HIQR) contribute to the substrate site. Catalysis depends on D131, which acts as the Proton acceptor.

Belongs to the phosphofructokinase type A (PFKA) family. Mixed-substrate PFK group III subfamily. As to quaternary structure, homodimer or homotetramer. It depends on Mg(2+) as a cofactor.

The protein localises to the cytoplasm. The catalysed reaction is beta-D-fructose 6-phosphate + ATP = beta-D-fructose 1,6-bisphosphate + ADP + H(+). The protein operates within carbohydrate degradation; glycolysis; D-glyceraldehyde 3-phosphate and glycerone phosphate from D-glucose: step 3/4. Functionally, catalyzes the phosphorylation of D-fructose 6-phosphate to fructose 1,6-bisphosphate by ATP, the first committing step of glycolysis. This chain is ATP-dependent 6-phosphofructokinase, found in Corynebacterium efficiens (strain DSM 44549 / YS-314 / AJ 12310 / JCM 11189 / NBRC 100395).